A 960-amino-acid polypeptide reads, in one-letter code: RasGEF domain-containing serine/threonine-protein kinase X (960 aa).

Residues 21-274 (LEFNEKIGKG…FDEILSQLKV (254 aa)) enclose the Protein kinase domain. ATP is bound by residues 27-35 (IGKGSFGSV) and Lys48. Asp140 acts as the Proton acceptor in catalysis. Residues 314 to 368 (NISFSPNNSNNNNNNNNNISNISPDITTGIQQINLSSSGGSNNSSPSTPPQGSQL) are compositionally biased toward low complexity. Disordered regions lie at residues 314-372 (NISF…VSLA) and 393-413 (GQLS…HKPS). The N-terminal Ras-GEF domain occupies 437-565 (PCYAALTSHI…LGTTISNNEL (129 aa)). Residues 596–651 (NNNNNNNNNPVNNINNINNNNSVNSSSSNNNNNNNNNNSNNNNNNNNNNNNNNNNN) are disordered. The region spanning 712–957 (HSTELARQIT…KNNSLKCEPP (246 aa)) is the Ras-GEF domain.

It belongs to the protein kinase superfamily. TKL Ser/Thr protein kinase family.

The enzyme catalyses L-seryl-[protein] + ATP = O-phospho-L-seryl-[protein] + ADP + H(+). It catalyses the reaction L-threonyl-[protein] + ATP = O-phospho-L-threonyl-[protein] + ADP + H(+). Its function is as follows. Promotes the exchange of Ras-bound GDP by GTP. The chain is RasGEF domain-containing serine/threonine-protein kinase X (gefX) from Dictyostelium discoideum (Social amoeba).